The primary structure comprises 48 residues: Protein YodE (48 aa).

The polypeptide is Protein YodE (Escherichia coli (strain K12)).